Consider the following 331-residue polypeptide: Ferrochelatase (331 aa).

Fe cation is bound by residues His-187 and Glu-286.

The protein belongs to the ferrochelatase family.

It localises to the cytoplasm. It carries out the reaction heme b + 2 H(+) = protoporphyrin IX + Fe(2+). It participates in porphyrin-containing compound metabolism; protoheme biosynthesis; protoheme from protoporphyrin-IX: step 1/1. Its function is as follows. Catalyzes the ferrous insertion into protoporphyrin IX. In Legionella pneumophila subsp. pneumophila (strain Philadelphia 1 / ATCC 33152 / DSM 7513), this protein is Ferrochelatase.